The sequence spans 156 residues: Small ribosomal subunit protein uS7 (156 aa).

Belongs to the universal ribosomal protein uS7 family. Part of the 30S ribosomal subunit. Contacts proteins S9 and S11.

Its function is as follows. One of the primary rRNA binding proteins, it binds directly to 16S rRNA where it nucleates assembly of the head domain of the 30S subunit. Is located at the subunit interface close to the decoding center, probably blocks exit of the E-site tRNA. The protein is Small ribosomal subunit protein uS7 of Mycobacterium leprae (strain Br4923).